A 393-amino-acid polypeptide reads, in one-letter code: Homoserine O-succinyltransferase (393 aa).

The AB hydrolase-1 domain maps to 62–372; the sequence is NAVLVCHALN…PHGHDAFLLD (311 aa). Serine 168 acts as the Nucleophile in catalysis. Arginine 238 lines the substrate pocket. Catalysis depends on residues aspartate 333 and histidine 366. Aspartate 367 contacts substrate.

The protein belongs to the AB hydrolase superfamily. MetX family. As to quaternary structure, homodimer.

The protein localises to the cytoplasm. It carries out the reaction L-homoserine + succinyl-CoA = O-succinyl-L-homoserine + CoA. It participates in amino-acid biosynthesis; L-methionine biosynthesis via de novo pathway; O-succinyl-L-homoserine from L-homoserine: step 1/1. In terms of biological role, transfers a succinyl group from succinyl-CoA to L-homoserine, forming succinyl-L-homoserine. The chain is Homoserine O-succinyltransferase from Cupriavidus taiwanensis (strain DSM 17343 / BCRC 17206 / CCUG 44338 / CIP 107171 / LMG 19424 / R1) (Ralstonia taiwanensis (strain LMG 19424)).